The chain runs to 522 residues: Zinc finger and BTB domain-containing protein 18 (522 aa).

In terms of domain architecture, BTB spans 24–91; it reads CDCTVLVGDA…MYEGKLQFKD (68 aa). Positions 121-143 are enriched in basic and acidic residues; it reads ATTEADSTKKEEDASSCSDKVES. The interval 121–165 is disordered; sequence ATTEADSTKKEEDASSCSDKVESLSDGSSHMAGDLPSDEDEGEDE. The residue at position 157 (Ser-157) is a Phosphoserine. Lys-273 is covalently cross-linked (Glycyl lysine isopeptide (Lys-Gly) (interchain with G-Cter in SUMO2)). The segment at 310 to 427 is interaction with DNMT3A; it reads EPAHLAPLRE…TFSCMYTLKR (118 aa). C2H2-type zinc fingers lie at residues 370 to 392, 410 to 432, 438 to 460, and 466 to 489; these read FMCP…LSTH, PTCS…ERTH, YTCT…AVVH, and HACK…RKFH. Phosphoserine occurs at positions 516 and 517.

The protein belongs to the krueppel C2H2-type zinc-finger protein family. ZBTB18 subfamily. As to quaternary structure, interacts with DNMT3A.

The protein resides in the nucleus. Transcriptional repressor that plays a role in various developmental processes such as myogenesis and brain development. Specifically binds the consensus DNA sequence 5'-[AC]ACATCTG[GT][AC]-3' which contains the E box core, and acts by recruiting chromatin remodeling multiprotein complexes. Plays a key role in myogenesis by directly repressing the expression of ID2 and ID3, 2 inhibitors of skeletal myogenesis. Also involved in controlling cell division of progenitor cells and regulating the survival of postmitotic cortical neurons. May also play a role in the organization of chromosomes in the nucleus. The polypeptide is Zinc finger and BTB domain-containing protein 18 (ZBTB18) (Bos taurus (Bovine)).